The sequence spans 360 residues: MKTSMQRKLDQLSTRLAELNDLLSRENVTADLDQYRKLTREHAELGPVVEQYALWRQSRSDEAAAQELLADPSMRDFAEDEIRSAREGMARLETELQKMLLPKDPNDDRNIFLEIRAGTGGDESALFAGDLLRMYLRFAERQRWQVEMMSESASDLGGYKEVIVRIAGQGAYSRLKFESGGHRVQRVPATETQGRIHTSACTVAVMPEADEIGEVEINPADLRIDTFRASGAGGQHINKTDSAVRVTHIPTGIVVECQDDRSQHKNKDRALKVLAARIKDKQYHEQHAKEAATRKSLIGSGDRSERIRTYNFPQGRMTDHRINLTLYRLEAIMDGDLDELIGALVTEHQAELLASLGEAD.

Gln-235 is subject to N5-methylglutamine.

It belongs to the prokaryotic/mitochondrial release factor family. Post-translationally, methylated by PrmC. Methylation increases the termination efficiency of RF1.

Its subcellular location is the cytoplasm. In terms of biological role, peptide chain release factor 1 directs the termination of translation in response to the peptide chain termination codons UAG and UAA. The protein is Peptide chain release factor 1 of Burkholderia cenocepacia (strain ATCC BAA-245 / DSM 16553 / LMG 16656 / NCTC 13227 / J2315 / CF5610) (Burkholderia cepacia (strain J2315)).